Consider the following 128-residue polypeptide: Sulfurtransferase TusD (128 aa).

Cys-78 functions as the Cysteine persulfide intermediate in the catalytic mechanism.

Belongs to the DsrE/TusD family. In terms of assembly, heterohexamer, formed by a dimer of trimers. The hexameric TusBCD complex contains 2 copies each of TusB, TusC and TusD. The TusBCD complex interacts with TusE.

Its subcellular location is the cytoplasm. Its function is as follows. Part of a sulfur-relay system required for 2-thiolation of 5-methylaminomethyl-2-thiouridine (mnm(5)s(2)U) at tRNA wobble positions. Accepts sulfur from TusA and transfers it in turn to TusE. In Escherichia coli O157:H7, this protein is Sulfurtransferase TusD.